The following is a 121-amino-acid chain: Small ribosomal subunit protein uS13 (121 aa).

The interval 91–121 is disordered; that stretch reads HRMSLPVRGQRTRTNARTRRGSRKTVAGRKK. Basic residues predominate over residues 100 to 121; it reads QRTRTNARTRRGSRKTVAGRKK.

This sequence belongs to the universal ribosomal protein uS13 family. In terms of assembly, part of the 30S ribosomal subunit. Forms a loose heterodimer with protein S19. Forms two bridges to the 50S subunit in the 70S ribosome.

Located at the top of the head of the 30S subunit, it contacts several helices of the 16S rRNA. In the 70S ribosome it contacts the 23S rRNA (bridge B1a) and protein L5 of the 50S subunit (bridge B1b), connecting the 2 subunits; these bridges are implicated in subunit movement. Contacts the tRNAs in the A and P-sites. The protein is Small ribosomal subunit protein uS13 of Prochlorococcus marinus (strain MIT 9312).